A 437-amino-acid polypeptide reads, in one-letter code: Epsilon-sarcoglycan (437 aa).

The Extracellular portion of the chain corresponds to 1–317; that stretch reads MQLPRWWELG…LKSRDYYTDF (317 aa). Asparagine 200 is a glycosylation site (N-linked (GlcNAc...) asparagine). A helical membrane pass occupies residues 318–338; sequence LITLAVPSAVALVLFLILAYI. Over 339-437 the chain is Cytoplasmic; sequence MCCRREGVEK…QQQTTGKWYP (99 aa).

The protein belongs to the sarcoglycan alpha/epsilon family. In terms of processing, N-glycosylated. Ubiquitinated, leading to its degradation by the proteasome. Ubiquitous.

The protein localises to the cell membrane. It is found in the sarcolemma. The protein resides in the cytoplasm. Its subcellular location is the cytoskeleton. It localises to the cell projection. The protein localises to the dendrite. It is found in the golgi apparatus. Functionally, component of the sarcoglycan complex, a subcomplex of the dystrophin-glycoprotein complex which forms a link between the F-actin cytoskeleton and the extracellular matrix. This Homo sapiens (Human) protein is Epsilon-sarcoglycan (SGCE).